A 435-amino-acid polypeptide reads, in one-letter code: Trigger factor (435 aa).

One can recognise a PPIase FKBP-type domain in the interval 161 to 246; it reads GKRVSIDFVG…VNKVEARELP (86 aa).

It belongs to the FKBP-type PPIase family. Tig subfamily.

The protein localises to the cytoplasm. It catalyses the reaction [protein]-peptidylproline (omega=180) = [protein]-peptidylproline (omega=0). Functionally, involved in protein export. Acts as a chaperone by maintaining the newly synthesized protein in an open conformation. Functions as a peptidyl-prolyl cis-trans isomerase. In Vibrio campbellii (strain ATCC BAA-1116), this protein is Trigger factor.